The sequence spans 41 residues: MKVKNSLRSLKNRHRDCRVVRRKGRVYVINKTQRRFKARQG.

It belongs to the bacterial ribosomal protein bL36 family.

This chain is Large ribosomal subunit protein bL36, found in Jannaschia sp. (strain CCS1).